The chain runs to 210 residues: uncharacterized protein (210 aa).

This is an uncharacterized protein from Fowl adenovirus A serotype 1 (strain CELO / Phelps) (FAdV-1).